The following is a 522-amino-acid chain: Sensory neuron membrane protein 2 (522 aa).

The Cytoplasmic portion of the chain corresponds to 1 to 7 (MLGKHTK). A helical membrane pass occupies residues 8-28 (LFFGVSLVALIVSVILAAWGF). Residues 29–469 (PKIVSKQIQK…QSHTLLGYVE (441 aa)) lie on the Extracellular side of the membrane. 9 N-linked (GlcNAc...) asparagine glycosylation sites follow: Asn-44, Asn-67, Asn-104, Asn-166, Asn-191, Asn-228, Asn-272, Asn-314, and Asn-343. 3 disulfides stabilise this stretch: Cys-268–Cys-338, Cys-299–Cys-362, and Cys-340–Cys-351. Residues 470-490 (AVRWALLAIAIVATAISAIAV) form a helical membrane-spanning segment. Topologically, residues 491 to 522 (ARSGLIPVWPRNANSVSFILSPHPNSDVNKVH) are cytoplasmic.

Belongs to the CD36 family. In terms of tissue distribution, detected in both male and female antennal tissues. Expression is two to three fold higher in male compared to female antenna. Detected at low levels in all body tissues except the female abdomen.

It is found in the cell membrane. Its function is as follows. Plays an olfactory role that is not restricted to pheromone sensitivity. This chain is Sensory neuron membrane protein 2, found in Ostrinia furnacalis (Asian corn borer).